An 88-amino-acid polypeptide reads, in one-letter code: Sec-independent protein translocase protein TatA (88 aa).

Residues 1–21 (MGSLSPWHWVVLVVVVVLLFG) traverse the membrane as a helical segment. Residues 49–71 (ENQAQASALETPMQNPTVVQSQR) show a composition bias toward polar residues. The segment at 49-88 (ENQAQASALETPMQNPTVVQSQRVVPPWSTEQDHTEARPA) is disordered. The span at 79-88 (EQDHTEARPA) shows a compositional bias: basic and acidic residues.

This sequence belongs to the TatA/E family. The Tat system comprises two distinct complexes: a TatABC complex, containing multiple copies of TatA, TatB and TatC subunits, and a separate TatA complex, containing only TatA subunits. Substrates initially bind to the TatABC complex, which probably triggers association of the separate TatA complex to form the active translocon.

It is found in the cell membrane. Part of the twin-arginine translocation (Tat) system that transports large folded proteins containing a characteristic twin-arginine motif in their signal peptide across membranes. TatA could form the protein-conducting channel of the Tat system. This is Sec-independent protein translocase protein TatA from Mycobacterium leprae (strain TN).